We begin with the raw amino-acid sequence, 109 residues long: Parvalbumin beta 2 (109 aa).

At A2 the chain carries N-acetylalanine. 2 consecutive EF-hand domains span residues 39-74 and 78-109; these read KSPA…FSAG and LSDA…MIKA. Residues D52, D54, S56, F58, E60, E63, D91, D93, D95, K97, and E102 each contribute to the Ca(2+) site.

The protein belongs to the parvalbumin family. In terms of assembly, monomer.

Functionally, in muscle, parvalbumin is thought to be involved in relaxation after contraction. It binds two calcium ions. In Gadus morhua (Atlantic cod), this protein is Parvalbumin beta 2.